The following is a 203-amino-acid chain: Linker for activation of T-cells family member 2 (203 aa).

Residues 1–6 (MSAELE) are Extracellular-facing. A helical; Signal-anchor for type III membrane protein membrane pass occupies residues 7 to 27 (LLWPVSGLLLLLLGATAWLCV). 2 S-palmitoyl cysteine lipidation sites follow: C26 and C29. The Cytoplasmic portion of the chain corresponds to 28–203 (HCSRPGVKRN…NGDVAAAENI (176 aa)). Y59 carries the phosphotyrosine modification. A phosphoserine mark is found at S60 and S95. Phosphotyrosine occurs at positions 139, 160, and 192. The tract at residues 171–203 (ESKRTMGAPMSLSGSPDEEPDYVNGDVAAAENI) is disordered.

When phosphorylated, interacts with GRB2. May also interact with SOS1, GAB1 and CBL. In terms of processing, phosphorylated on tyrosines following cross-linking of BCR in B-cells, high affinity IgG receptor (FCGR1) in myeloid cells, or high affinity IgE receptor (FCER1) in mast cells; which induces the recruitment of GRB2. As to expression, strongly expressed in testis. Expressed in heart, spleen and lung. Present in B-cells and mast cells (at protein level).

It localises to the cell membrane. Its function is as follows. Involved in FCER1 (high affinity immunoglobulin epsilon receptor)-mediated signaling in mast cells. May also be involved in BCR (B-cell antigen receptor)-mediated signaling in B-cells and FCGR1 (high affinity immunoglobulin gamma Fc receptor I)-mediated signaling in myeloid cells. Couples activation of these receptors and their associated kinases with distal intracellular events through the recruitment of GRB2. In Mus musculus (Mouse), this protein is Linker for activation of T-cells family member 2 (Lat2).